The following is a 195-amino-acid chain: 3-isopropylmalate dehydratase small subunit (195 aa).

Belongs to the LeuD family. LeuD type 1 subfamily. In terms of assembly, heterodimer of LeuC and LeuD.

The enzyme catalyses (2R,3S)-3-isopropylmalate = (2S)-2-isopropylmalate. It functions in the pathway amino-acid biosynthesis; L-leucine biosynthesis; L-leucine from 3-methyl-2-oxobutanoate: step 2/4. Catalyzes the isomerization between 2-isopropylmalate and 3-isopropylmalate, via the formation of 2-isopropylmaleate. This Karelsulcia muelleri (strain GWSS) (Sulcia muelleri) protein is 3-isopropylmalate dehydratase small subunit.